Consider the following 138-residue polypeptide: 1,4-dihydroxy-2-naphthoyl-CoA hydrolase (138 aa).

Asp14 is a catalytic residue.

This sequence belongs to the 4-hydroxybenzoyl-CoA thioesterase family. DHNA-CoA hydrolase subfamily.

It carries out the reaction 1,4-dihydroxy-2-naphthoyl-CoA + H2O = 1,4-dihydroxy-2-naphthoate + CoA + H(+). The protein operates within cofactor biosynthesis; phylloquinone biosynthesis. Its pathway is quinol/quinone metabolism; 1,4-dihydroxy-2-naphthoate biosynthesis; 1,4-dihydroxy-2-naphthoate from chorismate: step 7/7. Its function is as follows. Catalyzes the hydrolysis of 1,4-dihydroxy-2-naphthoyl-CoA (DHNA-CoA) to 1,4-dihydroxy-2-naphthoate (DHNA), a reaction involved in phylloquinone (vitamin K1) biosynthesis. The polypeptide is 1,4-dihydroxy-2-naphthoyl-CoA hydrolase (Rippkaea orientalis (strain PCC 8801 / RF-1) (Cyanothece sp. (strain PCC 8801))).